Consider the following 478-residue polypeptide: UDP-N-acetylmuramate--L-alanine ligase (478 aa).

120–126 lines the ATP pocket; sequence GSHGKTT.

Belongs to the MurCDEF family.

It localises to the cytoplasm. It catalyses the reaction UDP-N-acetyl-alpha-D-muramate + L-alanine + ATP = UDP-N-acetyl-alpha-D-muramoyl-L-alanine + ADP + phosphate + H(+). It participates in cell wall biogenesis; peptidoglycan biosynthesis. In terms of biological role, cell wall formation. The sequence is that of UDP-N-acetylmuramate--L-alanine ligase from Rickettsia bellii (strain OSU 85-389).